Consider the following 431-residue polypeptide: Histidinol dehydrogenase (431 aa).

Positions 124, 187, and 210 each coordinate NAD(+). Residues Ser-236, Gln-258, and His-261 each coordinate substrate. Residues Gln-258 and His-261 each coordinate Zn(2+). Residues Glu-325 and His-326 each act as proton acceptor in the active site. Positions 326, 359, 413, and 418 each coordinate substrate. A Zn(2+)-binding site is contributed by Asp-359. His-418 lines the Zn(2+) pocket.

The protein belongs to the histidinol dehydrogenase family. Zn(2+) serves as cofactor.

It catalyses the reaction L-histidinol + 2 NAD(+) + H2O = L-histidine + 2 NADH + 3 H(+). It functions in the pathway amino-acid biosynthesis; L-histidine biosynthesis; L-histidine from 5-phospho-alpha-D-ribose 1-diphosphate: step 9/9. Its function is as follows. Catalyzes the sequential NAD-dependent oxidations of L-histidinol to L-histidinaldehyde and then to L-histidine. The sequence is that of Histidinol dehydrogenase from Legionella pneumophila (strain Lens).